The sequence spans 397 residues: Glutamyl-tRNA reductase (397 aa).

Substrate contacts are provided by residues 47–50 (TCGR), serine 98, 103–105 (ETD), and glutamine 109. The active-site Nucleophile is cysteine 48. 177–182 (GAGAVG) lines the NADP(+) pocket.

It belongs to the glutamyl-tRNA reductase family. In terms of assembly, homodimer.

The catalysed reaction is (S)-4-amino-5-oxopentanoate + tRNA(Glu) + NADP(+) = L-glutamyl-tRNA(Glu) + NADPH + H(+). Its pathway is porphyrin-containing compound metabolism; protoporphyrin-IX biosynthesis; 5-aminolevulinate from L-glutamyl-tRNA(Glu): step 1/2. Catalyzes the NADPH-dependent reduction of glutamyl-tRNA(Glu) to glutamate 1-semialdehyde (GSA). The chain is Glutamyl-tRNA reductase from Pyrobaculum aerophilum (strain ATCC 51768 / DSM 7523 / JCM 9630 / CIP 104966 / NBRC 100827 / IM2).